A 1151-amino-acid chain; its full sequence is Chromosome partition protein Smc (1151 aa).

An ATP-binding site is contributed by 32 to 39 (PNGCGKSN). Coiled coils occupy residues 170–218 (ISGL…AARY), 342–379 (IGRL…ALGE), 407–508 (DSRT…REAQ), and 633–994 (LKQL…EGRE). Basic and acidic residues-rich tracts occupy residues 421–438 (RARE…RAAE) and 465–480 (DEAR…EARA). Disordered stretches follow at residues 421-483 (RARE…AQRS), 806-826 (SAEL…AAEA), and 862-889 (LRAA…AEAR). Residues 866–889 (QEAEREAERQAGESREARARAEAR) are compositionally biased toward basic and acidic residues.

The protein belongs to the SMC family. In terms of assembly, homodimer.

It is found in the cytoplasm. Its function is as follows. Required for chromosome condensation and partitioning. The chain is Chromosome partition protein Smc from Cereibacter sphaeroides (strain ATCC 17029 / ATH 2.4.9) (Rhodobacter sphaeroides).